The chain runs to 414 residues: Glucose-1-phosphate adenylyltransferase (414 aa).

Alpha-D-glucose 1-phosphate-binding positions include tyrosine 103, glycine 168, glutamate 183 to lysine 184, and serine 201.

Belongs to the bacterial/plant glucose-1-phosphate adenylyltransferase family. In terms of assembly, homotetramer.

It carries out the reaction alpha-D-glucose 1-phosphate + ATP + H(+) = ADP-alpha-D-glucose + diphosphate. It functions in the pathway glycan biosynthesis; glycogen biosynthesis. Functionally, involved in the biosynthesis of ADP-glucose, a building block required for the elongation reactions to produce glycogen. Catalyzes the reaction between ATP and alpha-D-glucose 1-phosphate (G1P) to produce pyrophosphate and ADP-Glc. This is Glucose-1-phosphate adenylyltransferase from Thermus caldophilus.